Consider the following 302-residue polypeptide: UDP-N-acetylenolpyruvoylglucosamine reductase (302 aa).

The 166-residue stretch at 23 to 188 (KVGGNAEIFF…LKAVFKVNKG (166 aa)) folds into the FAD-binding PCMH-type domain. R168 is an active-site residue. S217 acts as the Proton donor in catalysis. The active site involves E287.

This sequence belongs to the MurB family. FAD is required as a cofactor.

It is found in the cytoplasm. It catalyses the reaction UDP-N-acetyl-alpha-D-muramate + NADP(+) = UDP-N-acetyl-3-O-(1-carboxyvinyl)-alpha-D-glucosamine + NADPH + H(+). The protein operates within cell wall biogenesis; peptidoglycan biosynthesis. Its function is as follows. Cell wall formation. This chain is UDP-N-acetylenolpyruvoylglucosamine reductase, found in Rickettsia bellii (strain RML369-C).